Reading from the N-terminus, the 343-residue chain is Uroporphyrinogen decarboxylase (343 aa).

Residues 23 to 27 (RQAGR), D73, Y150, S205, and H322 each bind substrate.

The protein belongs to the uroporphyrinogen decarboxylase family. Homodimer.

Its subcellular location is the cytoplasm. The enzyme catalyses uroporphyrinogen III + 4 H(+) = coproporphyrinogen III + 4 CO2. It functions in the pathway porphyrin-containing compound metabolism; protoporphyrin-IX biosynthesis; coproporphyrinogen-III from 5-aminolevulinate: step 4/4. Functionally, catalyzes the decarboxylation of four acetate groups of uroporphyrinogen-III to yield coproporphyrinogen-III. The polypeptide is Uroporphyrinogen decarboxylase (Cereibacter sphaeroides (strain ATCC 17029 / ATH 2.4.9) (Rhodobacter sphaeroides)).